A 133-amino-acid chain; its full sequence is Putative actin-depolymerizing factor 11 (133 aa).

Residues 1–133 (MVLHDDCKLT…SLDAIRRRIN (133 aa)) form the ADF-H domain.

This sequence belongs to the actin-binding proteins ADF family.

It is found in the cytoplasm. Its subcellular location is the cytoskeleton. Its function is as follows. Actin-depolymerizing protein. Severs actin filaments (F-actin) and binds to actin monomers. This chain is Putative actin-depolymerizing factor 11 (ADF11), found in Arabidopsis thaliana (Mouse-ear cress).